Reading from the N-terminus, the 792-residue chain is MARTHILGFPRIGERRELKFAQEAFWRGDRTEAELRDVAAQLRRRHWQLQADRGLDTVATGDFAYYDQMLSLTALLGALPRRFGLDPARLTLTQYFELARGNREQPAMEMTKWFDTNYHYLVPELDAETTFDGGPAWFFEEADEALALGLRARPVLIGPVTYLWLSKSHVAGFDRLALLPQLLQGYRRILDQLKARGIEWVQIDEPALCLDLEPAWLDAFDTAYAALREAGPKLLLATYFDTAADHAQRAAALPVDGFHIDLVRAPEQLAAWQAALPAHAVLSLGVIDGRNIWRTDLRRVLDTLRPVQAALGERLWLAPSCSLLHVPVSLAHEVRLDVELKSWLAFATEKLDELSVLGRALNQSDAVVAEALAASDAAQASRRASRRVVKPRVQQRLAAVSAGMADRASPFAERIERQRQALQLPLLPTTTIGSFPQTAAIRQTRAAFKRGEIGALEYLERIRAEIAVAVRKQEALGLDVLVHGEAERNDMVEYFGEQLCGYGFTENGWVQSYGSRCVKPPVIYGDVYRPEPMTVDTARYAQSLTERPMKGMLTGPITMLQWSFVRDDQPRATTARQLALAIRDEVCDLEQAGIRVIQIDEPALREGLPLRRADWDAYLDWAVTAFRLSASGVQDQTQIHTHMCYAEFNDILPAIAAMDADVITIETSRSAMELLEGFGDFDYPNEIGPGVYDIHSPRVPSVQAMERLLDRACEVVPPQRLWVNPDCGLKTRGWEETEAALANMVSAARALRARLSARGATTWKRLSKPAAATAAAVPHAGNACTACATHAN.

5-methyltetrahydropteroyltri-L-glutamate is bound by residues 16 to 19 (RELK) and K112. L-homocysteine is bound by residues 432-434 (IGS) and E485. Residues 432–434 (IGS) and E485 contribute to the L-methionine site. 5-methyltetrahydropteroyltri-L-glutamate contacts are provided by residues 516–517 (RC) and W562. D600 lines the L-homocysteine pocket. An L-methionine-binding site is contributed by D600. E606 lines the 5-methyltetrahydropteroyltri-L-glutamate pocket. Zn(2+)-binding residues include H642, C644, and E666. Residue H695 is the Proton donor of the active site. Position 727 (C727) interacts with Zn(2+).

This sequence belongs to the vitamin-B12 independent methionine synthase family. It depends on Zn(2+) as a cofactor.

It catalyses the reaction 5-methyltetrahydropteroyltri-L-glutamate + L-homocysteine = tetrahydropteroyltri-L-glutamate + L-methionine. Its pathway is amino-acid biosynthesis; L-methionine biosynthesis via de novo pathway; L-methionine from L-homocysteine (MetE route): step 1/1. Catalyzes the transfer of a methyl group from 5-methyltetrahydrofolate to homocysteine resulting in methionine formation. The polypeptide is 5-methyltetrahydropteroyltriglutamate--homocysteine methyltransferase (Cupriavidus necator (Alcaligenes eutrophus)).